We begin with the raw amino-acid sequence, 317 residues long: tRNA pseudouridine synthase B (317 aa).

D47 acts as the Nucleophile in catalysis.

Belongs to the pseudouridine synthase TruB family. Type 1 subfamily.

The catalysed reaction is uridine(55) in tRNA = pseudouridine(55) in tRNA. Its function is as follows. Responsible for synthesis of pseudouridine from uracil-55 in the psi GC loop of transfer RNAs. The polypeptide is tRNA pseudouridine synthase B (Shewanella sp. (strain MR-4)).